Here is a 1448-residue protein sequence, read N- to C-terminus: ABC transporter G family member 9 (1448 aa).

The span at 16–28 shows a compositional bias: polar residues; sequence EGGSNLNINTPSG. Positions 16 to 41 are disordered; sequence EGGSNLNINTPSGMSDGDFNSGANSP. The region spanning 136-385 is the ABC transporter 1 domain; the sequence is LFKPSTWKIE…FLDLGFDCEP (250 aa). The region spanning 490 to 717 is the ABC transmembrane type-2 1 domain; that stretch reads WGDKFSLVSR…APYDNSVRVC (228 aa). Helical transmembrane passes span 494–514, 530–550, 579–599, 604–624, 634–654, 663–683, and 748–768; these read FSLVSRYLSVIIQSFVYGSVF, AIFAAILFNAFLSEGELFATF, IPLTTVQVFLFSIVVYFMFGL, GKFFIFCFTLIGATLATTNMF, LYVSQNVMTGILIFMISYCGY, PWFGWFFWANPFTYAFKALMA, and LNIFITYLWWVLFIIINMVAV. In terms of domain architecture, ABC transporter 2 spans 822–1066; sequence FTWENIKYTV…LTSYFERQGV (245 aa). 858-865 is an ATP binding site; that stretch reads GSSGAGKT. A run of 6 helical transmembrane segments spans residues 1157–1177, 1191–1211, 1233–1253, 1272–1292, 1299–1319, and 1422–1442; these read FYAYGSILQAVMTGIIVGFTF, IFFIFQALLLGILLIFVVMVQ, FAISIVLVEIPYTIVCGSVFF, FYFWIIFIIYLFFCVSFGGAI, MFLAMTLVPLLIVFLFLFCGV, and IAILIAFWMFNIFLVVSFVYL. An ABC transmembrane type-2 2 domain is found at 1157 to 1389; it reads FYAYGSILQA…VPATGYVTNT (233 aa).

Belongs to the ABC transporter superfamily. ABCG family. PDR (TC 3.A.1.205) subfamily.

The protein resides in the membrane. The protein is ABC transporter G family member 9 (abcG9) of Dictyostelium discoideum (Social amoeba).